We begin with the raw amino-acid sequence, 230 residues long: Cytochrome c oxidase subunit 2 (230 aa).

At 1-14 the chain is on the mitochondrial intermembrane side; that stretch reads MAHPTQLGFKDAAM. The chain crosses the membrane as a helical span at residues 15 to 45; it reads PVMEELLHFHDHALMIVLLISTLVLYIITAM. Residues 46–59 are Mitochondrial matrix-facing; the sequence is VSTKLTNKYILDSQ. A helical membrane pass occupies residues 60 to 87; it reads EIEIVWTILPAVILVLIALPSLRILYLM. The Mitochondrial intermembrane portion of the chain corresponds to 88-230; the sequence is DEINDPHLTI…NWSSLMLEDA (143 aa). Residues His-161, Cys-196, Glu-198, Cys-200, His-204, and Met-207 each contribute to the Cu cation site. Glu-198 provides a ligand contact to Mg(2+).

The protein belongs to the cytochrome c oxidase subunit 2 family. As to quaternary structure, component of the cytochrome c oxidase (complex IV, CIV), a multisubunit enzyme composed of 14 subunits. The complex is composed of a catalytic core of 3 subunits MT-CO1, MT-CO2 and MT-CO3, encoded in the mitochondrial DNA, and 11 supernumerary subunits COX4I, COX5A, COX5B, COX6A, COX6B, COX6C, COX7A, COX7B, COX7C, COX8 and NDUFA4, which are encoded in the nuclear genome. The complex exists as a monomer or a dimer and forms supercomplexes (SCs) in the inner mitochondrial membrane with NADH-ubiquinone oxidoreductase (complex I, CI) and ubiquinol-cytochrome c oxidoreductase (cytochrome b-c1 complex, complex III, CIII), resulting in different assemblies (supercomplex SCI(1)III(2)IV(1) and megacomplex MCI(2)III(2)IV(2)). Found in a complex with TMEM177, COA6, COX18, COX20, SCO1 and SCO2. Interacts with TMEM177 in a COX20-dependent manner. Interacts with COX20. Interacts with COX16. Requires Cu cation as cofactor.

The protein resides in the mitochondrion inner membrane. The catalysed reaction is 4 Fe(II)-[cytochrome c] + O2 + 8 H(+)(in) = 4 Fe(III)-[cytochrome c] + 2 H2O + 4 H(+)(out). In terms of biological role, component of the cytochrome c oxidase, the last enzyme in the mitochondrial electron transport chain which drives oxidative phosphorylation. The respiratory chain contains 3 multisubunit complexes succinate dehydrogenase (complex II, CII), ubiquinol-cytochrome c oxidoreductase (cytochrome b-c1 complex, complex III, CIII) and cytochrome c oxidase (complex IV, CIV), that cooperate to transfer electrons derived from NADH and succinate to molecular oxygen, creating an electrochemical gradient over the inner membrane that drives transmembrane transport and the ATP synthase. Cytochrome c oxidase is the component of the respiratory chain that catalyzes the reduction of oxygen to water. Electrons originating from reduced cytochrome c in the intermembrane space (IMS) are transferred via the dinuclear copper A center (CU(A)) of subunit 2 and heme A of subunit 1 to the active site in subunit 1, a binuclear center (BNC) formed by heme A3 and copper B (CU(B)). The BNC reduces molecular oxygen to 2 water molecules using 4 electrons from cytochrome c in the IMS and 4 protons from the mitochondrial matrix. The chain is Cytochrome c oxidase subunit 2 (mt-co2) from Cyprinus carpio (Common carp).